Consider the following 213-residue polypeptide: MKPYQRQFIEFALSKQVLKFGEFTLKSGRKSPYFFNAGLFNTGRDLALLGRFYAEALVDSGIEFDLLFGPAYKGIPIATTTAVALAEHHDRDLPYCFNRKEAKTHGEGGNLVGSPLQGRVMLVDDVITAGTAIRESMEIIQAQGAQLAGVLISLDRQERGRGEISAIQEVERDYGCQVISIITLKELIAYLEEKPEMAEYLASVRAYREAYGI.

Lys-26 serves as a coordination point for 5-phospho-alpha-D-ribose 1-diphosphate. 34 to 35 (FF) contributes to the orotate binding site. 5-phospho-alpha-D-ribose 1-diphosphate-binding positions include 72–73 (YK), Arg-99, Lys-100, Lys-103, His-105, and 124–132 (DDVITAGTA). Orotate-binding residues include Thr-128 and Arg-156.

This sequence belongs to the purine/pyrimidine phosphoribosyltransferase family. PyrE subfamily. Homodimer. Mg(2+) is required as a cofactor.

The catalysed reaction is orotidine 5'-phosphate + diphosphate = orotate + 5-phospho-alpha-D-ribose 1-diphosphate. It participates in pyrimidine metabolism; UMP biosynthesis via de novo pathway; UMP from orotate: step 1/2. Functionally, catalyzes the transfer of a ribosyl phosphate group from 5-phosphoribose 1-diphosphate to orotate, leading to the formation of orotidine monophosphate (OMP). The protein is Orotate phosphoribosyltransferase of Klebsiella pneumoniae (strain 342).